The primary structure comprises 191 residues: Dephospho-CoA kinase (191 aa).

One can recognise a DPCK domain in the interval 3-191; it reads AIGITGSYAS…KLILVIARKL (189 aa). Position 11 to 16 (11 to 16) interacts with ATP; that stretch reads ASGKTF.

This sequence belongs to the CoaE family.

It is found in the cytoplasm. The catalysed reaction is 3'-dephospho-CoA + ATP = ADP + CoA + H(+). It functions in the pathway cofactor biosynthesis; coenzyme A biosynthesis; CoA from (R)-pantothenate: step 5/5. Its function is as follows. Catalyzes the phosphorylation of the 3'-hydroxyl group of dephosphocoenzyme A to form coenzyme A. The protein is Dephospho-CoA kinase of Rickettsia felis (strain ATCC VR-1525 / URRWXCal2) (Rickettsia azadi).